The primary structure comprises 415 residues: Meiotic driver wtf36 (415 aa).

2 disordered regions span residues 1 to 49 (MKNK…DLNN) and 67 to 99 (TTPPDYDENRLHITDEGNNPPNTHRENHSSGTA). Over residues 11 to 29 (SMDEMSAKNDNEIDLEKGP) the composition is skewed to basic and acidic residues. Transmembrane regions (helical) follow at residues 105-125 (FLIKLLISFTPIVLLNAPAVC), 142-162 (WTLFGFWCLVCTLALIFLTYF), 169-189 (AVKVTVIFLAQCVKVTVIFLA), 205-225 (VTAISLAKCIKVTAIFLAQCV), 240-260 (VVIIWLLWVVICYTLFLRSKF), 274-294 (CSISAALLLFLLYVRLPFWTL), and 298-318 (FSGLFQVLGVQSCVVIVTKGL).

It belongs to the WTF family. In terms of assembly, homomer. Forms protein aggregates. The two isoforms can interact with each other and with themselves. High sequence similarity is required for their interaction.

Its subcellular location is the spore membrane. The protein localises to the vacuole membrane. It localises to the ascus epiplasm. It is found in the cytoplasm. The protein resides in the endoplasmic reticulum membrane. Promotes unequal transmission of alleles from the parental zygote to progeny spores by acting as poison/antidote system where the poison and antidote proteins are produced from the same locus; the poison component is trans-acting and targets all spores within an ascus whereas the antidote component is spore-specific, leading to poisoning of all progeny that do not inherit the allele. Functionally, localizes isoform 2 to the vacuole thereby facilitating its degradation. Its function is as follows. Forms toxic aggregates that disrupt spore maturation. This is Meiotic driver wtf36 from Schizosaccharomyces pombe (Fission yeast).